Consider the following 322-residue polypeptide: Cysteine synthase (322 aa).

Residues asparagine 8 and arginine 35 each coordinate hydrogen sulfide. Lysine 42 is modified (N6-(pyridoxal phosphate)lysine). Residues asparagine 72 and 177–181 (GTGGT) contribute to the pyridoxal 5'-phosphate site. Leucine 269 provides a ligand contact to hydrogen sulfide. Serine 273 provides a ligand contact to pyridoxal 5'-phosphate.

It belongs to the cysteine synthase/cystathionine beta-synthase family. As to quaternary structure, homodimer. Requires pyridoxal 5'-phosphate as cofactor.

The catalysed reaction is O-acetyl-L-serine + hydrogen sulfide = L-cysteine + acetate. It participates in amino-acid biosynthesis; L-cysteine biosynthesis; L-cysteine from L-serine: step 2/2. The protein is Cysteine synthase (cysK) of Buchnera aphidicola subsp. Schizaphis graminum (strain Sg).